The primary structure comprises 433 residues: Glutamate-1-semialdehyde 2,1-aminomutase (433 aa).

Lysine 271 carries the N6-(pyridoxal phosphate)lysine modification.

The protein belongs to the class-III pyridoxal-phosphate-dependent aminotransferase family. HemL subfamily. As to quaternary structure, homodimer. Requires pyridoxal 5'-phosphate as cofactor.

It is found in the cytoplasm. It carries out the reaction (S)-4-amino-5-oxopentanoate = 5-aminolevulinate. The protein operates within porphyrin-containing compound metabolism; protoporphyrin-IX biosynthesis; 5-aminolevulinate from L-glutamyl-tRNA(Glu): step 2/2. It functions in the pathway porphyrin-containing compound metabolism; chlorophyll biosynthesis. The sequence is that of Glutamate-1-semialdehyde 2,1-aminomutase from Prochlorococcus marinus subsp. pastoris (strain CCMP1986 / NIES-2087 / MED4).